The following is a 136-amino-acid chain: S-protein homolog 6 (136 aa).

The first 17 residues, methionine 1–threonine 17, serve as a signal peptide directing secretion. Asparagine 76 and asparagine 108 each carry an N-linked (GlcNAc...) asparagine glycan.

The protein belongs to the plant self-incompatibility (S1) protein family.

The protein resides in the secreted. The polypeptide is S-protein homolog 6 (Arabidopsis thaliana (Mouse-ear cress)).